Consider the following 202-residue polypeptide: STEFQRYMEIVIVVDHSMVKKYNGDSPKIKAWVYEMINTITEGYRDLYIDIILSGLEIWSEKDLINVEASAGNTLKSFGEWRAKDLIHRISHDNAQLLTATDFDGPTIGLAYVASMCEPKLSVGVIQDHSSVNRLVAITLAHEMAHNLGVRHDEKDCVGVVYLCIMRIPVVEDKRSYFSDCSYIQCREYISKENPPCILNKP.

The region spanning 6-202 (RYMEIVIVVD…ENPPCILNKP (197 aa)) is the Peptidase M12B domain. Ca(2+)-binding residues include Glu9 and Asp93. 2 disulfide bridges follow: Cys117–Cys197 and Cys157–Cys181. His142 serves as a coordination point for Zn(2+). Residue Glu143 is part of the active site. 2 residues coordinate Zn(2+): His146 and His152. Residues Cys197 and Asn200 each coordinate Ca(2+).

This sequence belongs to the venom metalloproteinase (M12B) family. P-I subfamily. As to quaternary structure, monomer. Requires Zn(2+) as cofactor. In terms of tissue distribution, expressed by the venom gland.

Its subcellular location is the secreted. Snake venom metalloproteinase that impairs hemostasis in the envenomed animal. The sequence is that of Snake venom metalloproteinase Ac1 from Deinagkistrodon acutus (Hundred-pace snake).